Consider the following 399-residue polypeptide: Cyclic dehypoxanthine futalosine synthase (399 aa).

The Radical SAM core domain maps to 56-288 (ATYIIERNIN…IAIARVFLDN (233 aa)). Residues Cys70, Cys74, and Cys77 each contribute to the [4Fe-4S] cluster site.

Belongs to the radical SAM superfamily. MqnC family. Requires [4Fe-4S] cluster as cofactor.

The catalysed reaction is dehypoxanthine futalosine + S-adenosyl-L-methionine = cyclic dehypoxanthinylfutalosinate + 5'-deoxyadenosine + L-methionine + H(+). The protein operates within quinol/quinone metabolism; menaquinone biosynthesis. Functionally, radical SAM enzyme that catalyzes the cyclization of dehypoxanthine futalosine (DHFL) into cyclic dehypoxanthine futalosine (CDHFL), a step in the biosynthesis of menaquinone (MK, vitamin K2). The sequence is that of Cyclic dehypoxanthine futalosine synthase from Streptomyces coelicolor (strain ATCC BAA-471 / A3(2) / M145).